Reading from the N-terminus, the 582-residue chain is Putative G-protein coupled receptor B0244.10 (582 aa).

4 consecutive transmembrane segments (helical) span residues 25–45, 70–90, 120–140, and 159–179; these read LYII…PLGL, ITFS…GFAV, WTFF…GLVI, and LLVQ…VFLT. N-linked (GlcNAc...) asparagine glycosylation occurs at Asn-190. A helical transmembrane segment spans residues 199-218; sequence LTLGKWFIALYRFLFQMTNI. N-linked (GlcNAc...) asparagine glycosylation is found at Asn-221 and Asn-237. The next 5 helical transmembrane spans lie at 253–273, 296–316, 329–349, 377–397, and 421–441; these read SLMI…AVLV, YIFV…IIII, TFAF…SLLG, IYII…PFGL, and WLLF…LLFV. N-linked (GlcNAc...) asparagine glycosylation occurs at Asn-457. 2 helical membrane-spanning segments follow: residues 475 to 495 and 513 to 533; these read TILV…AAFG and LIFP…TFLL. Asn-538 carries an N-linked (GlcNAc...) asparagine glycan.

Belongs to the G-protein coupled receptor 1 family. B0244 subfamily.

It is found in the cell membrane. This chain is Putative G-protein coupled receptor B0244.10, found in Caenorhabditis elegans.